A 1366-amino-acid polypeptide reads, in one-letter code: Protein HUA2-LIKE 2 (1366 aa).

The PWWP domain maps to valine 24–glutamate 81. The span at leucine 111–glutamate 124 shows a compositional bias: basic and acidic residues. Disordered stretches follow at residues leucine 111–proline 138, threonine 203–lysine 319, asparagine 384–asparagine 403, glutamate 427–serine 451, and serine 787–lysine 808. Polar residues predominate over residues valine 213–glycine 252. Residues serine 391 to asparagine 403 are compositionally biased toward basic and acidic residues. The span at serine 787 to isoleucine 803 shows a compositional bias: polar residues. Positions aspartate 836–serine 977 constitute a CID domain. Disordered stretches follow at residues leucine 1027–arginine 1076 and threonine 1128–aspartate 1366. The span at glycine 1032 to aspartate 1052 shows a compositional bias: acidic residues. The segment covering threonine 1057–glutamate 1066 has biased composition (basic and acidic residues). Pro residues predominate over residues proline 1138–proline 1152. Over residues leucine 1191–phenylalanine 1223 the composition is skewed to polar residues. Residues proline 1229–glutamine 1244 show a composition bias toward pro residues. Composition is skewed to basic and acidic residues over residues glutamate 1251–alanine 1262 and cysteine 1275–tryptophan 1298. Low complexity predominate over residues arginine 1299–arginine 1309.

Expressed throughout young primordia, and vegetative and reproductive apices.

It is found in the nucleus. Functionally, probable transcription factor that acts with partial redundancy with HULK1 and HULK3. Plays diverse and essential roles in the control of plant development, physiology and flowering time. The sequence is that of Protein HUA2-LIKE 2 from Arabidopsis thaliana (Mouse-ear cress).